We begin with the raw amino-acid sequence, 359 residues long: Type-1 angiotensin II receptor B (359 aa).

Topologically, residues 1-25 (MTLNSSTEDGIKRIQDDCPKAGRHN) are extracellular. N-linked (GlcNAc...) asparagine glycosylation occurs at Asn-4. Gln-15 and Asp-17 together coordinate angiotensin II. Intrachain disulfides connect Cys-18–Cys-274 and Cys-101–Cys-180. The chain crosses the membrane as a helical span at residues 26–55 (YIFVMIPTLYSIIFVVGIFGNSLVVIVIYF). Over 56-61 (YMKLKT) the chain is Cytoplasmic. A helical membrane pass occupies residues 62–89 (VASVFLLNLALADLCFLLTLPLWAVYTA). Residues 90–98 (MEYRWPFGN) are Extracellular-facing. A helical membrane pass occupies residues 99-125 (HLCKIASASVSFNLYASVFLLTCLSID). The Cytoplasmic segment spans residues 126–141 (RYLAIVHPMKSRLRRT). The helical transmembrane segment at 142–165 (MLVAKVTCIIIWLMAGLASLPAVI) threads the bilayer. The Extracellular portion of the chain corresponds to 166-190 (YRNVYFIENTNITVCAFHYESQNST). Angiotensin II is bound at residue Arg-167. N-linked (GlcNAc...) asparagine glycosylation occurs at Asn-176. 3 residues coordinate angiotensin II: Phe-182, His-183, and Tyr-184. N-linked (GlcNAc...) asparagine glycosylation is present at Asn-188. Residues 191–216 (LPIGLGLTKNILGFVFPFLIILTSYT) traverse the membrane as a helical segment. Position 199 (Lys-199) interacts with angiotensin II. Residues 217–239 (LIWKALKKAYKIQKNTPRNDDIF) lie on the Cytoplasmic side of the membrane. A helical transmembrane segment spans residues 240–268 (RIIMAIVLFFFFSWVPHQIFTFLDVLIQL). Over 269–278 (GIIRDCEIAD) the chain is Extracellular. The chain crosses the membrane as a helical span at residues 279-304 (IVDTAMPITICIAYFNNCLNPLFYGF). Topologically, residues 305 to 359 (LGKKFKKYFLQLLKYIPPTAKSHAGLSTKMSTLSYRPSDNMSSSAKKSASFFEVE) are cytoplasmic. A disordered region spans residues 339–359 (YRPSDNMSSSAKKSASFFEVE). Residues 346–359 (SSSAKKSASFFEVE) show a composition bias toward low complexity.

It belongs to the G-protein coupled receptor 1 family. Interacts with MAS1. Interacts with ARRB1. Interacts with FLNA (via filamin repeat 21); increases PKA-mediated phosphorylation of FLNA. In terms of processing, C-terminal Ser or Thr residues may be phosphorylated. As to expression, is expressed in the liver, kidney, aorta, lung, uterus, ovary, spleen, heart, and vascular smooth muscle cell. Expressed most abundantly in the adrenal gland.

Its subcellular location is the cell membrane. Functionally, receptor for angiotensin II, a vasoconstricting peptide, which acts as a key regulator of blood pressure and sodium retention by the kidney. The activated receptor in turn couples to G-alpha proteins G(q) (GNAQ, GNA11, GNA14 or GNA15) and thus activates phospholipase C and increases the cytosolic Ca(2+) concentrations, which in turn triggers cellular responses such as stimulation of protein kinase C. The chain is Type-1 angiotensin II receptor B (Agtr1b) from Rattus norvegicus (Rat).